A 450-amino-acid chain; its full sequence is Phosphopentomutase (450 aa).

Serine 93 functions as the Phosphoserine intermediate in the catalytic mechanism. Mg(2+)-binding residues include serine 93, aspartate 231, aspartate 233, and aspartate 235. At serine 93 the chain carries Phosphoserine; by autocatalysis.

This sequence belongs to the phosphohexose mutase family. Homotetramer. The cofactor is Mg(2+). In terms of processing, activated by phosphorylation.

It catalyses the reaction alpha-D-ribose 1-phosphate = D-ribose 5-phosphate. The catalysed reaction is 2-deoxy-alpha-D-ribose 1-phosphate = 2-deoxy-D-ribose 5-phosphate. Its function is as follows. Catalyzes the conversion of deoxyribose 1-phosphate to deoxyribose 5-phosphate. Also shows weak activity with glucose 1-phosphate and mannose 1-phosphate. Could be involved in pentose biosynthesis. The polypeptide is Phosphopentomutase (Thermococcus kodakarensis (strain ATCC BAA-918 / JCM 12380 / KOD1) (Pyrococcus kodakaraensis (strain KOD1))).